A 659-amino-acid chain; its full sequence is Siderophore transporter fer7 (659 aa).

The tract at residues 1–62 (MSNQAQDQPE…ADASSAREGQ (62 aa)) is disordered. The span at 31–41 (QSVSAHGNTSL) shows a compositional bias: polar residues. N38 carries an N-linked (GlcNAc...) asparagine glycan. Positions 42–54 (NKKDRVSAVRDAD) are enriched in basic and acidic residues. A run of 8 helical transmembrane segments spans residues 79-99 (NSPI…CFAL), 121-141 (LFGV…PFIA), 150-170 (QTAY…VASA), 208-228 (GVVT…GNLI), 245-265 (GMFA…LMYV), 316-336 (LVGL…FSIY), 348-368 (IIAM…WEIL), and 379-399 (VWYN…FMGG). N-linked (GlcNAc...) asparagine glycosylation is present at N415. The next 2 helical transmembrane spans lie at 424–444 (VVNA…GFYL) and 451–471 (KFLQ…YLYG). N475 carries N-linked (GlcNAc...) asparagine glycosylation. 3 helical membrane passes run 478–498 (TMVV…SVVG), 528–548 (AIGS…YLAA), and 590–610 (PIFI…LLMP).

Belongs to the major facilitator superfamily.

It is found in the membrane. Its function is as follows. Siderophore transporter; part of the gene cluster that mediates the biosynthesis of siderophore ferrichrome A which is contributing to organismal virulence. This Mycosarcoma maydis (Corn smut fungus) protein is Siderophore transporter fer7.